A 1849-amino-acid polypeptide reads, in one-letter code: Brefeldin A-inhibited guanine nucleotide-exchange protein 1 (1849 aa).

A DCB; DCB:DCB domain and DCB:HUS domain interaction region spans residues 2–224; the sequence is YEGKKTKNMF…QEAKQMEKER (223 aa). Residues 46–58 show a composition bias toward basic and acidic residues; the sequence is AETEKQSPPHGEA. Disordered stretches follow at residues 46–65, 216–248, 267–302, and 378–413; these read AETE…SSTL, EAKQ…QLRY, LHTN…DQAT, and TPIS…SPGA. Phosphoserine is present on S52. Positions 267 to 277 are enriched in basic and acidic residues; that stretch reads LHTNDVDKSLQ. 5 positions are modified to phosphoserine: S286, S289, S290, S397, and S410. A compositionally biased stretch (polar residues) spans 394 to 409; sequence SVSSNDTQESGNSSGP. Residues 557 to 577 form an HUS; DCB:HUS domain interaction region; that stretch reads ADAQSVVDIYVNYDCDLNAAN. Residues 709–840 enclose the SEC7 domain; that stretch reads FNKKPKRGIQ…IIMLTTDLHS (132 aa). Residues 711–715 carry the Nuclear localization signal (NLS) motif; sequence KKPKR. S1079 bears the Phosphoserine mark. Positions 1543–1562 are disordered; that stretch reads RPNSGETAPPPPSPVSEKPL. Phosphoserine occurs at positions 1566 and 1569.

Homodimer. Interacts with ARFGEF2/BIG2; both proteins are probably part of the same or very similar macromolecular complexes. Interacts with FKBP2. Interacts with MYO9B. Interacts with PRKAR1A and PRKAR2A. Interacts with PPP1CC. Interacts with NCL, FBL, NUP62 and U3 small nucleolar RNA. Interacts with DPY30. Interacts with PDE3A. Interacts with KANK1. Interacts with TBC1D22A and TBC1D22B. Interacts (via N-terminus) with ARL1. Post-translationally, phosphorylated. In vitro phosphorylated by PKA reducing its GEF activity and dephosphorylated by phosphatase PP1. As to expression, expressed in placenta, lung, heart, brain, kidney and pancreas.

The protein localises to the cytoplasm. It localises to the perinuclear region. The protein resides in the golgi apparatus. Its subcellular location is the trans-Golgi network membrane. It is found in the nucleus. The protein localises to the nucleolus. It localises to the nucleus matrix. Its activity is regulated as follows. Inhibited by brefeldin A. Promotes guanine-nucleotide exchange on ARF1 and ARF3. Promotes the activation of ARF1/ARF3 through replacement of GDP with GTP. Involved in vesicular trafficking. Required for the maintenance of Golgi structure; the function may be independent of its GEF activity. Required for the maturation of integrin beta-1 in the Golgi. Involved in the establishment and persistence of cell polarity during directed cell movement in wound healing. Proposed to act as A kinase-anchoring protein (AKAP) and may mediate crosstalk between Arf and PKA pathways. Inhibits GAP activity of MYO9B probably through competitive RhoA binding. The function in the nucleus remains to be determined. The sequence is that of Brefeldin A-inhibited guanine nucleotide-exchange protein 1 (ARFGEF1) from Homo sapiens (Human).